The chain runs to 1177 residues: DNA-directed RNA polymerase subunit beta' (1177 aa).

Zn(2+)-binding residues include Cys60, Cys62, Cys75, and Cys78. Mg(2+) contacts are provided by Asp450, Asp452, and Asp454. Positions 795, 869, 876, and 879 each coordinate Zn(2+).

This sequence belongs to the RNA polymerase beta' chain family. The RNAP catalytic core consists of 2 alpha, 1 beta, 1 beta' and 1 omega subunit. When a sigma factor is associated with the core the holoenzyme is formed, which can initiate transcription. The cofactor is Mg(2+). Zn(2+) is required as a cofactor.

It carries out the reaction RNA(n) + a ribonucleoside 5'-triphosphate = RNA(n+1) + diphosphate. In terms of biological role, DNA-dependent RNA polymerase catalyzes the transcription of DNA into RNA using the four ribonucleoside triphosphates as substrates. The protein is DNA-directed RNA polymerase subunit beta' of Clostridium botulinum (strain Alaska E43 / Type E3).